The sequence spans 817 residues: Sorting nexin-29 (817 aa).

Positions Ser37–Lys181 constitute an RUN domain. Ser269, Ser292, Ser293, Ser331, and Ser345 each carry phosphoserine. Positions Asp271 to Arg299 are disordered. Disordered regions lie at residues Lys344–Gly381 and Ala417–Ala460. Positions Asp347 to Val358 are enriched in acidic residues. Over residues Gly369–Leu378 the composition is skewed to basic and acidic residues. Residues Ser445–Ala460 are compositionally biased toward low complexity. Position 451 is a phosphoserine (Ser451). The stretch at Met466–Val546 forms a coiled coil. A Phosphoserine modification is found at Ser641. Thr643 is modified (phosphothreonine). Residues Ser644 and Ser648 each carry the phosphoserine modification. A PX domain is found at Ala658–Gly781. Positions Leu784–Leu817 are disordered.

Belongs to the sorting nexin family.

The protein is Sorting nexin-29 (SNX29) of Bos taurus (Bovine).